The following is a 480-amino-acid chain: Aspartyl/glutamyl-tRNA(Asn/Gln) amidotransferase subunit B (480 aa).

This sequence belongs to the GatB/GatE family. GatB subfamily. In terms of assembly, heterotrimer of A, B and C subunits.

It carries out the reaction L-glutamyl-tRNA(Gln) + L-glutamine + ATP + H2O = L-glutaminyl-tRNA(Gln) + L-glutamate + ADP + phosphate + H(+). The enzyme catalyses L-aspartyl-tRNA(Asn) + L-glutamine + ATP + H2O = L-asparaginyl-tRNA(Asn) + L-glutamate + ADP + phosphate + 2 H(+). In terms of biological role, allows the formation of correctly charged Asn-tRNA(Asn) or Gln-tRNA(Gln) through the transamidation of misacylated Asp-tRNA(Asn) or Glu-tRNA(Gln) in organisms which lack either or both of asparaginyl-tRNA or glutaminyl-tRNA synthetases. The reaction takes place in the presence of glutamine and ATP through an activated phospho-Asp-tRNA(Asn) or phospho-Glu-tRNA(Gln). This chain is Aspartyl/glutamyl-tRNA(Asn/Gln) amidotransferase subunit B, found in Streptococcus thermophilus (strain ATCC BAA-491 / LMD-9).